The chain runs to 336 residues: Glyceraldehyde-3-phosphate dehydrogenase (336 aa).

Residues 12-13 (RI), Asp34, Arg78, and Thr121 contribute to the NAD(+) site. Residues 151-153 (SCT), Thr182, Arg199, 212-213 (TG), and Arg235 contribute to the D-glyceraldehyde 3-phosphate site. Cys152 functions as the Nucleophile in the catalytic mechanism. Asn316 is an NAD(+) binding site.

It belongs to the glyceraldehyde-3-phosphate dehydrogenase family. In terms of assembly, homotetramer.

Its subcellular location is the cytoplasm. It carries out the reaction D-glyceraldehyde 3-phosphate + phosphate + NAD(+) = (2R)-3-phospho-glyceroyl phosphate + NADH + H(+). It functions in the pathway carbohydrate degradation; glycolysis; pyruvate from D-glyceraldehyde 3-phosphate: step 1/5. Its function is as follows. Also binds human plasminogen. Catalyzes the oxidative phosphorylation of glyceraldehyde 3-phosphate (G3P) to 1,3-bisphosphoglycerate (BPG) using the cofactor NAD. The first reaction step involves the formation of a hemiacetal intermediate between G3P and a cysteine residue, and this hemiacetal intermediate is then oxidized to a thioester, with concomitant reduction of NAD to NADH. The reduced NADH is then exchanged with the second NAD, and the thioester is attacked by a nucleophilic inorganic phosphate to produce BPG. This is Glyceraldehyde-3-phosphate dehydrogenase (gap) from Streptococcus pyogenes.